The sequence spans 232 residues: MSGDENPASKPTPVQDVQGDGRWMSLHHRFVADSKDKEPEVVFIGDSLVQLMHQCEIWRELFSPLHALNFGIGGDSTQHVLWRLENGELEHIRPKIVVVWVGTNNHGHTAEQVTGGIKAIVQLVNERQPQARVVVLGLLPRGQHPNPLREKNRRVNELVRAALAGHPRAHFLDADPGFVHSDGTISHHDMYDYLHLSRLGYTPVCRALHSLLLRLLTQDQGQGGAPLPEPSP.

N-acetylserine is present on Ser2. Ser2 carries the phosphoserine modification. Active-site residues include Ser47, Asp192, and His195.

Belongs to the 'GDSL' lipolytic enzyme family. Platelet-activating factor acetylhydrolase IB beta/gamma subunits subfamily. As to quaternary structure, forms a catalytic dimer which is either homodimer (alpha1/alpha1 homodimer) or heterodimer with PAFAH1B2 (alpha1/alpha2 heterodimer). Component of the cytosolic (PAF-AH (I)) heterotetrameric enzyme, which is composed of PAFAH1B1 (beta), PAFAH1B2 (alpha2) and PAFAH1B3 (alpha1) subunits. The catalytic activity of the enzyme resides in the alpha1 (PAFAH1B3) and alpha2 (PAFAH1B2) subunits, whereas the beta subunit (PAFAH1B1) has regulatory activity. Trimer formation is not essential for the catalytic activity. Interacts with VLDLR; this interaction may modulate the Reelin pathway.

Its subcellular location is the cytoplasm. It carries out the reaction a 1-O-alkyl-2-acetyl-sn-glycero-3-phosphocholine + H2O = a 1-O-alkyl-sn-glycero-3-phosphocholine + acetate + H(+). The enzyme catalyses 1-O-hexadecyl-2-acetyl-sn-glycero-3-phosphocholine + H2O = 1-O-hexadecyl-sn-glycero-3-phosphocholine + acetate + H(+). It catalyses the reaction 1-O-hexadecyl-2-acetyl-sn-glycero-3-phosphate + H2O = 1-O-hexadecyl-sn-glycero-3-phosphate + acetate + H(+). Its activity is regulated as follows. Beta subunit (PAFAH1B1) inhibits the acetylhydrolase activity of the alpha1/alpha1 catalytic homodimer. Functionally, alpha1 catalytic subunit of the cytosolic type I platelet-activating factor (PAF) acetylhydrolase (PAF-AH (I)) heterotetrameric enzyme that catalyzes the hydrolyze of the acetyl group at the sn-2 position of PAF and its analogs and modulates the action of PAF. The activity and substrate specificity of PAF-AH (I) are affected by its subunit composition. Both alpha1/alpha1 homodimer (PAFAH1B3/PAFAH1B3 homodimer) and alpha1/alpha2 heterodimer(PAFAH1B3/PAFAH1B2 heterodimer) hydrolyze 1-O-alkyl-2-acetyl-sn-glycero-3-phosphoric acid (AAGPA) more efficiently than PAF, but they have little hydrolytic activity towards 1-O-alkyl-2-acetyl-sn-glycero-3-phosphorylethanolamine (AAGPE). Plays an important role during the development of brain. The polypeptide is Platelet-activating factor acetylhydrolase IB subunit alpha1 (Bos taurus (Bovine)).